Consider the following 92-residue polypeptide: Small ribosomal subunit protein uS19 (92 aa).

Belongs to the universal ribosomal protein uS19 family.

Functionally, protein S19 forms a complex with S13 that binds strongly to the 16S ribosomal RNA. The protein is Small ribosomal subunit protein uS19 of Bifidobacterium longum subsp. infantis (strain ATCC 15697 / DSM 20088 / JCM 1222 / NCTC 11817 / S12).